The following is a 370-amino-acid chain: tRNA-specific 2-thiouridylase MnmA (370 aa).

ATP is bound by residues 9 to 16 and M35; that span reads GMSGGVDS. An interaction with target base in tRNA region spans residues 95–97; that stretch reads NPD. Catalysis depends on C100, which acts as the Nucleophile. An intrachain disulfide couples C100 to C196. G124 contacts ATP. The interval 146 to 148 is interaction with tRNA; it reads KDQ. The active-site Cysteine persulfide intermediate is the C196. Positions 308–309 are interaction with tRNA; sequence RY.

The protein belongs to the MnmA/TRMU family.

The protein localises to the cytoplasm. It carries out the reaction S-sulfanyl-L-cysteinyl-[protein] + uridine(34) in tRNA + AH2 + ATP = 2-thiouridine(34) in tRNA + L-cysteinyl-[protein] + A + AMP + diphosphate + H(+). Catalyzes the 2-thiolation of uridine at the wobble position (U34) of tRNA, leading to the formation of s(2)U34. This chain is tRNA-specific 2-thiouridylase MnmA, found in Ralstonia pickettii (strain 12J).